A 191-amino-acid chain; its full sequence is Thymidine kinase (191 aa).

Residues 9 to 16 and 85 to 88 contribute to the ATP site; these read GSMNSGKT and DESQ. Glutamate 86 acts as the Proton acceptor in catalysis. Zn(2+)-binding residues include cysteine 143, cysteine 146, cysteine 181, and cysteine 184.

This sequence belongs to the thymidine kinase family. In terms of assembly, homotetramer.

The protein localises to the cytoplasm. The catalysed reaction is thymidine + ATP = dTMP + ADP + H(+). This is Thymidine kinase from Listeria innocua serovar 6a (strain ATCC BAA-680 / CLIP 11262).